A 253-amino-acid polypeptide reads, in one-letter code: HTH-type transcriptional regulator YdeO (253 aa).

In terms of domain architecture, HTH araC/xylS-type spans 137 to 233 (GKVRNIVNMK…GNSPKRVSKE (97 aa)). 2 consecutive DNA-binding regions (H-T-H motif) follow at residues 154–175 (KDIC…KQEQ) and 200–223 (VNKI…RKHF).

Induces the expression of gadE and mdtEF. Could also regulate the expression of other genes involved in acid resistance. The protein is HTH-type transcriptional regulator YdeO (ydeO) of Escherichia coli (strain K12).